We begin with the raw amino-acid sequence, 313 residues long: UbiA prenyltransferase claS (313 aa).

The next 2 helical transmembrane spans lie at 30–52 (FAGT…RALL) and 57–79 (TFGT…GCIW). The short motif at 81-88 (DILDQDFD) is the NDxxDxxxD element. Mg(2+) contacts are provided by aspartate 84 and aspartate 88. The next 3 membrane-spanning stretches (helical) occupy residues 99–121 (IASG…FILM), 131–148 (AWMI…IYPL), and 155–177 (WPQA…YTTG). Aspartate 205 and aspartate 209 together coordinate Mg(2+). A DxxxD motif is present at residues 205-209 (DKKDD). Residues 205-209 (DKKDD) carry the YxxxK motif. Helical transmembrane passes span 227-247 (PVLS…GILN), 250-270 (ELPY…TQLW), and 293-313 (AIVW…GAIM).

Belongs to the UbiA prenyltransferase family. Mg(2+) is required as a cofactor.

Its subcellular location is the membrane. The catalysed reaction is hydroquinone + (2E)-geranyl diphosphate = (2E)-geranylhydroquinone + diphosphate. It functions in the pathway secondary metabolite biosynthesis; terpenoid biosynthesis. Prenyltransferase; part of the gene cluster that mediates the biosynthesis of clavilactone A, a meroterpenoid that features a unique benzo-fused ten-membered carbocyclic ring unit with an alpha,beta-epoxy-gamma-lactone moiety, forming an intriguing 10/5/3 tricyclic nested skeleton. ClaR, ClaS and ClaT are sufficient to produce clavilactone A. Within the pathway, claS acts as an atypical UbiA prenyltransferase that transfers geranyl pyrophosphate (GPP) to hydroquinone (HYQ) instead of p-hydroxybenzoic acid (PHB), producing the first intermediate geranylhydroquinone. The cytochrome P450 monooxygenase claR then catalyzes the diradical coupling reaction between the intramolecular hydroquinone and allyl moieties to form the benzo-fused ten-membered carbocyclic ring unit of wigantol. Finally the cytochrome P450 monooxygenase claT exquisitely and stereoselectively assembles the alpha,beta-epoxy-gamma-lactone moiety, producing clavilactone A via arnebinol A. This Ampulloclitocybe clavipes (Club foot) protein is UbiA prenyltransferase claS.